Here is a 427-residue protein sequence, read N- to C-terminus: Serine hydroxymethyltransferase (427 aa).

Residues Leu-122 and 126–128 each bind (6S)-5,6,7,8-tetrahydrofolate; that span reads GHL. N6-(pyridoxal phosphate)lysine is present on Lys-231. 355–357 is a binding site for (6S)-5,6,7,8-tetrahydrofolate; it reads SPF.

This sequence belongs to the SHMT family. Homodimer. Pyridoxal 5'-phosphate is required as a cofactor.

Its subcellular location is the cytoplasm. It carries out the reaction (6R)-5,10-methylene-5,6,7,8-tetrahydrofolate + glycine + H2O = (6S)-5,6,7,8-tetrahydrofolate + L-serine. It functions in the pathway one-carbon metabolism; tetrahydrofolate interconversion. Its pathway is amino-acid biosynthesis; glycine biosynthesis; glycine from L-serine: step 1/1. Catalyzes the reversible interconversion of serine and glycine with tetrahydrofolate (THF) serving as the one-carbon carrier. This reaction serves as the major source of one-carbon groups required for the biosynthesis of purines, thymidylate, methionine, and other important biomolecules. Also exhibits THF-independent aldolase activity toward beta-hydroxyamino acids, producing glycine and aldehydes, via a retro-aldol mechanism. In Synechococcus sp. (strain ATCC 27144 / PCC 6301 / SAUG 1402/1) (Anacystis nidulans), this protein is Serine hydroxymethyltransferase.